We begin with the raw amino-acid sequence, 254 residues long: 3-deoxy-manno-octulosonate cytidylyltransferase (254 aa).

This sequence belongs to the KdsB family.

The protein resides in the cytoplasm. It catalyses the reaction 3-deoxy-alpha-D-manno-oct-2-ulosonate + CTP = CMP-3-deoxy-beta-D-manno-octulosonate + diphosphate. The protein operates within nucleotide-sugar biosynthesis; CMP-3-deoxy-D-manno-octulosonate biosynthesis; CMP-3-deoxy-D-manno-octulosonate from 3-deoxy-D-manno-octulosonate and CTP: step 1/1. It participates in bacterial outer membrane biogenesis; lipopolysaccharide biosynthesis. In terms of biological role, activates KDO (a required 8-carbon sugar) for incorporation into bacterial lipopolysaccharide in Gram-negative bacteria. The polypeptide is 3-deoxy-manno-octulosonate cytidylyltransferase (Pseudoalteromonas atlantica (strain T6c / ATCC BAA-1087)).